The primary structure comprises 571 residues: Cytochrome P450 monooxygenase g430 (571 aa).

Residues 8–28 (GALIWVVTSYILYAIISNFII) traverse the membrane as a helical segment. Residue Cys471 coordinates heme. A disordered region spans residues 552–571 (CPLPAEAKLPKSRKPIGTAS).

It belongs to the cytochrome P450 family. It depends on heme as a cofactor.

The protein localises to the membrane. Its pathway is mycotoxin biosynthesis. In terms of biological role, cytochrome P450 monooxygenase; part of the gene cluster that mediates the biosynthesis of 1233A, a natural compound known as an inhibitor of HMG-CoA synthase in the mevalonate pathway and with antibacterial and antifungal activities. The highly reducing polyketide synthase g433 is responsible for the 1233A backbone biosynthesis and the cytochrome P450 monooxygenase g430 catalyzes oxidation of the backbone. This Fusarium sp protein is Cytochrome P450 monooxygenase g430.